The sequence spans 125 residues: Small ribosomal subunit protein eS25 (125 aa).

A compositionally biased stretch (basic and acidic residues) spans Met-1–Val-23. The disordered stretch occupies residues Met-1–Gly-38. Positions Gly-28–Gly-38 are enriched in basic residues. Lys-43 bears the N6-acetyllysine mark. Lys-52 carries the post-translational modification N6-acetyllysine; alternate. An N6-succinyllysine; alternate modification is found at Lys-52. An N6-acetyllysine mark is found at Lys-60 and Lys-66. The residue at position 94 (Lys-94) is an N6-acetyllysine; alternate. Lys-94 bears the N6-succinyllysine; alternate mark.

It belongs to the eukaryotic ribosomal protein eS25 family. As to quaternary structure, component of the small ribosomal subunit.

The protein resides in the cytoplasm. Functionally, component of the small ribosomal subunit. The ribosome is a large ribonucleoprotein complex responsible for the synthesis of proteins in the cell. The sequence is that of Small ribosomal subunit protein eS25 (RPS25) from Homo sapiens (Human).